Consider the following 429-residue polypeptide: Apolipoprotein A-IV (429 aa).

An N-terminal signal peptide occupies residues 1–20; sequence MFLKAVVLTLALVAVTGARA. Tandem repeats lie at residues 33-54, 60-81, 82-103, 115-136, 137-158, 159-180, 181-202, 203-224, 225-246, 247-268, 269-286, 287-308, and 309-330. Residues 33-330 are 13 X 22 AA approximate tandem repeats; the sequence is DYFSQLSSNA…QMEQLRQKLG (298 aa). The interval 359 to 429 is disordered; the sequence is KEKESQDNTL…QVQMLAPLES (71 aa). Residues 381 to 420 are compositionally biased toward low complexity; the sequence is QEQQQEQEQEQQQQQEQQQQQEQQREQQQQEQQQEQQQEQ.

This sequence belongs to the apolipoprotein A1/A4/E family. Homodimer. Post-translationally, phosphorylation sites are present in the extracellular medium. As to expression, secreted in plasma.

It localises to the secreted. May have a role in chylomicrons and VLDL secretion and catabolism. Required for efficient activation of lipoprotein lipase by ApoC-II; potent activator of LCAT. Apoa-IV is a major component of HDL and chylomicrons. The protein is Apolipoprotein A-IV (APOA4) of Macaca fascicularis (Crab-eating macaque).